The following is a 454-amino-acid chain: Mitochondrial dynamics protein MID49 (454 aa).

The Mitochondrial intermembrane segment spans residues 1-22 (MAEFSQKQRKQSGSEGLGSVVD). Residues 23-43 (FLLANARLVLGVGGAAVLGIA) form a helical membrane-spanning segment. The Cytoplasmic portion of the chain corresponds to 44-454 (TLAVKRLIDR…SGLQVPESLF (411 aa)). Residues 76–113 (ATSPQKPQPPPAAFSQPLATGSPSPSVPVEPTPIHSPT) form a disordered region.

The protein belongs to the MID49/MID51 family. In terms of assembly, interacts with DNM1L.

The protein resides in the mitochondrion outer membrane. Mitochondrial outer membrane protein which regulates mitochondrial organization. It is required for mitochondrial fission and promotes the recruitment and association of the fission mediator dynamin-related protein 1 (DNM1L) to the mitochondrial surface independently of the mitochondrial fission FIS1 and MFF proteins. Regulates DNM1L GTPase activity. The protein is Mitochondrial dynamics protein MID49 (Mief2) of Mus musculus (Mouse).